The following is a 243-amino-acid chain: Protein-L-isoaspartate O-methyltransferase 2 (243 aa).

The interval 21-42 (DACADRGHPSAERSTPETERRR) is disordered. Residues 23 to 42 (CADRGHPSAERSTPETERRR) show a composition bias toward basic and acidic residues. Residue S94 is part of the active site.

Belongs to the methyltransferase superfamily. L-isoaspartyl/D-aspartyl protein methyltransferase family.

Its subcellular location is the cytoplasm. It catalyses the reaction [protein]-L-isoaspartate + S-adenosyl-L-methionine = [protein]-L-isoaspartate alpha-methyl ester + S-adenosyl-L-homocysteine. Functionally, catalyzes the methyl esterification of L-isoaspartyl residues in peptides and proteins that result from spontaneous decomposition of normal L-aspartyl and L-asparaginyl residues. It plays a role in the repair and/or degradation of damaged proteins. The protein is Protein-L-isoaspartate O-methyltransferase 2 of Anaeromyxobacter sp. (strain Fw109-5).